The following is a 345-amino-acid chain: N-acetyl-gamma-glutamyl-phosphate reductase (345 aa).

Residue Cys151 is part of the active site.

This sequence belongs to the NAGSA dehydrogenase family. Type 1 subfamily.

It localises to the cytoplasm. The enzyme catalyses N-acetyl-L-glutamate 5-semialdehyde + phosphate + NADP(+) = N-acetyl-L-glutamyl 5-phosphate + NADPH + H(+). The protein operates within amino-acid biosynthesis; L-arginine biosynthesis; N(2)-acetyl-L-ornithine from L-glutamate: step 3/4. Functionally, catalyzes the NADPH-dependent reduction of N-acetyl-5-glutamyl phosphate to yield N-acetyl-L-glutamate 5-semialdehyde. The sequence is that of N-acetyl-gamma-glutamyl-phosphate reductase from Clostridium novyi (strain NT).